A 206-amino-acid chain; its full sequence is MSTKKRRLLKVIILGDSGVGKTSLMNQYVQKKFTKEYKATIGADFLTKEIEVDDKKVTMQIWDTAGQERFQSLGSAFYRGADCCVLVFDVNNAKSFDDLDNWRDEFIIQAGPPDPDNFPFMVLGNKIDENGGSSRQVSEKKAKAWCASKGSIPYFETSAKEDINVEAAFTCITRNALRNEKEEELFMPDAVDMNTTATQRKRAGCC.

15-22 (GDSGVGKT) contributes to the GTP binding site. The Effector region motif lies at 37 to 45 (YKATIGADF). GTP is bound by residues 63–67 (DTAGQ) and 125–128 (NKID). Residues C205 and C206 are each lipidated (S-geranylgeranyl cysteine).

Belongs to the small GTPase superfamily. Rab family.

The protein localises to the cell membrane. Protein transport. Probably involved in vesicular traffic. This Chlamydomonas reinhardtii (Chlamydomonas smithii) protein is GTP-binding protein YPTC5 (YPTC5).